The chain runs to 463 residues: Type IV secretion system protein PtlD (463 aa).

The first 24 residues, 1–24 (MAGLSRILLSCTLACLLAGQAAQA), serve as a signal peptide directing secretion. 5 helical membrane passes run 118–138 (LQPLVYSMMTLLVLLTGYALL), 232–252 (WLLCAMIVAASAGGWLCLAAS), 253–273 (LLIVPGLIVTLLLSLGPLFLV), 294–314 (ALVFMALGTPAVGLLSDVLAG), and 333–353 (MLAATLCATATLMLLTLVPLA). Low complexity predominate over residues 376–410 (AHRQAAARQYAPRPAAAAAAAGPHQAGTYAASATP). The tract at residues 376-463 (AHRQAAARQY…RVLPRKPNLP (88 aa)) is disordered. Over residues 411–420 (APAPARPAPS) the composition is skewed to pro residues. Positions 441 to 455 (VRRDDRPAPAPDRRV) are enriched in basic and acidic residues.

The protein localises to the cell membrane. In terms of biological role, component of the type IV secretion system ptl required for secretion of assembled pertussis toxin (PTX) through the outer membrane. The sequence is that of Type IV secretion system protein PtlD (ptlD) from Bordetella pertussis (strain Tohama I / ATCC BAA-589 / NCTC 13251).